Reading from the N-terminus, the 438-residue chain is Phosphoribosylamine--glycine ligase (438 aa).

Residues 107–319 (RKLFEDYDIP…LAKISKQIVD (213 aa)) enclose the ATP-grasp domain. 134–197 (IDNFDEPVVV…EELLLGEEYT (64 aa)) serves as a coordination point for ATP. 3 residues coordinate Mg(2+): Gln-277, Glu-289, and Asn-291. Residues Gln-277, Glu-289, and Asn-291 each contribute to the Mn(2+) site.

This sequence belongs to the GARS family. Mg(2+) is required as a cofactor. The cofactor is Mn(2+).

The catalysed reaction is 5-phospho-beta-D-ribosylamine + glycine + ATP = N(1)-(5-phospho-beta-D-ribosyl)glycinamide + ADP + phosphate + H(+). The protein operates within purine metabolism; IMP biosynthesis via de novo pathway; N(1)-(5-phospho-D-ribosyl)glycinamide from 5-phospho-alpha-D-ribose 1-diphosphate: step 2/2. The protein is Phosphoribosylamine--glycine ligase of Methanosphaera stadtmanae (strain ATCC 43021 / DSM 3091 / JCM 11832 / MCB-3).